A 268-amino-acid polypeptide reads, in one-letter code: tRNA pseudouridine synthase A (268 aa).

The active-site Nucleophile is the aspartate 52. Tyrosine 110 contacts substrate.

It belongs to the tRNA pseudouridine synthase TruA family. Homodimer.

It carries out the reaction uridine(38/39/40) in tRNA = pseudouridine(38/39/40) in tRNA. Formation of pseudouridine at positions 38, 39 and 40 in the anticodon stem and loop of transfer RNAs. In Prochlorococcus marinus (strain MIT 9515), this protein is tRNA pseudouridine synthase A.